The sequence spans 208 residues: Uracil phosphoribosyltransferase (208 aa).

5-phospho-alpha-D-ribose 1-diphosphate-binding positions include Arg-78, Arg-103, and 130–138 (DPMLATGGS). Residues Ile-193 and 198–200 (GDA) each bind uracil. Residue Asp-199 participates in 5-phospho-alpha-D-ribose 1-diphosphate binding.

It belongs to the UPRTase family. It depends on Mg(2+) as a cofactor.

It carries out the reaction UMP + diphosphate = 5-phospho-alpha-D-ribose 1-diphosphate + uracil. The protein operates within pyrimidine metabolism; UMP biosynthesis via salvage pathway; UMP from uracil: step 1/1. Its activity is regulated as follows. Allosterically activated by GTP. In terms of biological role, catalyzes the conversion of uracil and 5-phospho-alpha-D-ribose 1-diphosphate (PRPP) to UMP and diphosphate. This chain is Uracil phosphoribosyltransferase, found in Citrobacter koseri (strain ATCC BAA-895 / CDC 4225-83 / SGSC4696).